The primary structure comprises 204 residues: Large ribosomal subunit protein uL4 (204 aa).

The span at 42–55 (GSRQGSKAQKNRSA) shows a compositional bias: polar residues. Residues 42–85 (GSRQGSKAQKNRSAVSGGGKRPWAQKGTGRARAGTTRGPIWRSG) form a disordered region. Positions 68–79 (GTGRARAGTTRG) are enriched in low complexity.

This sequence belongs to the universal ribosomal protein uL4 family. As to quaternary structure, part of the 50S ribosomal subunit.

Its function is as follows. One of the primary rRNA binding proteins, this protein initially binds near the 5'-end of the 23S rRNA. It is important during the early stages of 50S assembly. It makes multiple contacts with different domains of the 23S rRNA in the assembled 50S subunit and ribosome. Forms part of the polypeptide exit tunnel. This chain is Large ribosomal subunit protein uL4, found in Vesicomyosocius okutanii subsp. Calyptogena okutanii (strain HA).